Reading from the N-terminus, the 566-residue chain is Putative ABC transporter ATP-binding protein lp_0149 (566 aa).

2 ABC transporter domains span residues 6–247 (ISFK…GLRE) and 302–536 (LAIE…ASLA). Residues 40–47 (GPSGSGKS) and 335–342 (GQNGTGKS) contribute to the ATP site.

It belongs to the ABC transporter superfamily.

The protein resides in the cell membrane. Probably part of an ABC transporter complex. Responsible for energy coupling to the transport system. The sequence is that of Putative ABC transporter ATP-binding protein lp_0149 from Lactiplantibacillus plantarum (strain ATCC BAA-793 / NCIMB 8826 / WCFS1) (Lactobacillus plantarum).